Consider the following 149-residue polypeptide: MQLTSYTDYSLRLLLYLALQPKHKLSSVKQVADIYRISYNHLTKVTHELGKLGLIETIKGRNGGIRLAKEPEEINIGEVVKQTEDNLELVECFNRETNTCILNPACRLKGVLHEALAAYLQVLEQYTVKDLVLNEDDLRALLQFKTTEQ.

The HTH rrf2-type domain occupies glutamine 2–leucine 133. The segment at residues valine 28–lysine 51 is a DNA-binding region (H-T-H motif). Positions 92, 100, and 106 each coordinate [2Fe-2S] cluster.

[2Fe-2S] cluster is required as a cofactor.

Functionally, nitric oxide-responsive transcriptional regulator. The sequence is that of HTH-type transcriptional regulator NsrR (nsrR) from Shouchella clausii (strain KSM-K16) (Alkalihalobacillus clausii).